We begin with the raw amino-acid sequence, 439 residues long: Transcriptional enhancer factor TEF-5 (439 aa).

Positions 1-12 are enriched in polar residues; it reads MASNSWTANSSP. Residues 1-34 are disordered; the sequence is MASNSWTANSSPGEAREDGSEGLDKGLDNDAEGV. Residue Ala-2 is modified to N-acetylalanine. The span at 14 to 28 shows a compositional bias: basic and acidic residues; it reads EAREDGSEGLDKGLD. Residues 28–104 constitute a DNA-binding region (TEA); the sequence is DNDAEGVWSP…QVLARKKVRE (77 aa). Ser-148 is modified (phosphoserine). A transcriptional activation region spans residues 173 to 439; the sequence is GPSQDIKPFA…QHHVYKLVKD (267 aa).

In terms of assembly, interacts with YAP1 and WWTR1/TAZ. As to expression, expressed in embryos as well as in many adult tissues.

The protein resides in the nucleus. In terms of biological role, transcription factor which plays a key role in the Hippo signaling pathway, a pathway involved in organ size control and tumor suppression by restricting proliferation and promoting apoptosis. The core of this pathway is composed of a kinase cascade wherein MST1/MST2, in complex with its regulatory protein SAV1, phosphorylates and activates LATS1/2 in complex with its regulatory protein MOB1, which in turn phosphorylates and inactivates YAP1 oncoprotein and WWTR1/TAZ. Acts by mediating gene expression of YAP1 and WWTR1/TAZ, thereby regulating cell proliferation, migration and epithelial mesenchymal transition (EMT) induction. The chain is Transcriptional enhancer factor TEF-5 (Tead3) from Mus musculus (Mouse).